Reading from the N-terminus, the 380-residue chain is Chorismate synthase (380 aa).

Arginine 48 provides a ligand contact to NADP(+). FMN-binding positions include 126 to 128, glycine 300, 315 to 319, and arginine 342; these read HFS and KPISS.

It belongs to the chorismate synthase family. Homotetramer. FMNH2 serves as cofactor.

It catalyses the reaction 5-O-(1-carboxyvinyl)-3-phosphoshikimate = chorismate + phosphate. The protein operates within metabolic intermediate biosynthesis; chorismate biosynthesis; chorismate from D-erythrose 4-phosphate and phosphoenolpyruvate: step 7/7. Functionally, catalyzes the anti-1,4-elimination of the C-3 phosphate and the C-6 proR hydrogen from 5-enolpyruvylshikimate-3-phosphate (EPSP) to yield chorismate, which is the branch point compound that serves as the starting substrate for the three terminal pathways of aromatic amino acid biosynthesis. This reaction introduces a second double bond into the aromatic ring system. This chain is Chorismate synthase, found in Lancefieldella parvula (strain ATCC 33793 / DSM 20469 / CCUG 32760 / JCM 10300 / KCTC 3663 / VPI 0546 / 1246) (Atopobium parvulum).